A 144-amino-acid polypeptide reads, in one-letter code: Ribosomal RNA large subunit methyltransferase H (144 aa).

S-adenosyl-L-methionine contacts are provided by residues leucine 63, glycine 92, and 111–116 (LSPMTF).

It belongs to the RNA methyltransferase RlmH family. Homodimer.

It localises to the cytoplasm. The catalysed reaction is pseudouridine(1915) in 23S rRNA + S-adenosyl-L-methionine = N(3)-methylpseudouridine(1915) in 23S rRNA + S-adenosyl-L-homocysteine + H(+). In terms of biological role, specifically methylates the pseudouridine at position 1915 (m3Psi1915) in 23S rRNA. The sequence is that of Ribosomal RNA large subunit methyltransferase H from Parasynechococcus marenigrum (strain WH8102).